A 64-amino-acid chain; its full sequence is SPbeta prophage-derived uncharacterized protein YoqI (64 aa).

The chain is SPbeta prophage-derived uncharacterized protein YoqI (yoqI) from Bacillus subtilis (strain 168).